The sequence spans 225 residues: Probable polyketide biosynthesis zinc-dependent hydrolase BaeB (225 aa).

Residues His-62, His-64, Asp-66, His-67, His-123, Asp-140, and His-181 each contribute to the Zn(2+) site.

This sequence belongs to the metallo-beta-lactamase superfamily. It depends on Zn(2+) as a cofactor.

It is found in the cytoplasm. It functions in the pathway antibiotic biosynthesis; bacillaene biosynthesis. Probably involved in some intermediate steps for the synthesis of the antibiotic polyketide bacillaene which is involved in secondary metabolism. This is Probable polyketide biosynthesis zinc-dependent hydrolase BaeB (baeB) from Bacillus velezensis (strain DSM 23117 / BGSC 10A6 / LMG 26770 / FZB42) (Bacillus amyloliquefaciens subsp. plantarum).